The primary structure comprises 550 residues: Glutamyl-tRNA(Gln) amidotransferase subunit A, mitochondrial (550 aa).

Catalysis depends on charge relay system residues lysine 79 and serine 171. The active-site Acyl-ester intermediate is serine 195. The tract at residues 371 to 390 (EKDENKVDNDNDDDDDVDEN) is disordered.

The protein belongs to the amidase family. GatA subfamily. As to quaternary structure, subunit of the heterotrimeric GatCAB amidotransferase (AdT) complex, composed of A, B and C subunits.

The protein resides in the mitochondrion. The catalysed reaction is L-glutamyl-tRNA(Gln) + L-glutamine + ATP + H2O = L-glutaminyl-tRNA(Gln) + L-glutamate + ADP + phosphate + H(+). Allows the formation of correctly charged Gln-tRNA(Gln) through the transamidation of misacylated Glu-tRNA(Gln) in the mitochondria. The reaction takes place in the presence of glutamine and ATP through an activated gamma-phospho-Glu-tRNA(Gln). This is Glutamyl-tRNA(Gln) amidotransferase subunit A, mitochondrial from Dictyostelium discoideum (Social amoeba).